We begin with the raw amino-acid sequence, 949 residues long: Phosphocholine transferase AnkX (949 aa).

The Fido domain occupies 155-289 (LNPEQIPDLA…IFNTVEIIEQ (135 aa)). ANK repeat units follow at residues 391-420 (VGKT…DLSL), 424-453 (DGKT…SQED), 464-494 (HGKT…QINE), 498-527 (SGSS…DISD), 554-583 (LNKE…DIDI), 588-617 (DKAT…NTRL), 658-687 (NGNP…RVDF), 691-720 (LGNN…TLLH), 725-767 (ERRN…DLNK), and 771-800 (KGKT…HTNI).

The protein resides in the secreted. It is found in the host cytoplasm. It carries out the reaction [Rab1 protein]-L-serine + CDP-choline = [Rab1 protein]-O-phosphocholine-L-serine + CMP + H(+). Functionally, virulence effector that plays a role in hijacking the host vesicular trafficking by recruiting the small guanosine triphosphatase (GTPase) Rab1 to the cytosolic face of the Legionella-containing vacuole (LCVs). Acts as a phosphocholine transferase by mediating the addition of phosphocholine to Ser residues of host RAB1 (RAB1A, RAB1B or RAB1C) and RAB35, leading to displacement of GDP dissociation inhibitors (GDI). Phosphocholination of target proteins also impairs accessibility to GTPase effector LepB. Can act on both GDP-bound and GTP-bound Rab proteins. This Legionella pneumophila subsp. pneumophila (strain Philadelphia 1 / ATCC 33152 / DSM 7513) protein is Phosphocholine transferase AnkX (ankX).